The primary structure comprises 335 residues: DNA polymerase beta (335 aa).

A Glycyl lysine isopeptide (Lys-Gly) (interchain with G-Cter in ubiquitin) cross-link involves residue lysine 41. Residue lysine 60 coordinates K(+). Residue lysine 60 coordinates Na(+). Lysine 61 participates in a covalent cross-link: Glycyl lysine isopeptide (Lys-Gly) (interchain with G-Cter in ubiquitin). K(+) is bound by residues leucine 62 and valine 65. 2 residues coordinate Na(+): leucine 62 and valine 65. The active-site Nucleophile; Schiff-base intermediate with DNA; for 5'-dRP lyase activity is lysine 72. Residue lysine 72 is modified to N6-acetyllysine. Lysine 81 participates in a covalent cross-link: Glycyl lysine isopeptide (Lys-Gly) (interchain with G-Cter in ubiquitin). Position 83 is an omega-N-methylarginine; by PRMT6 (arginine 83). Positions 101, 103, and 106 each coordinate K(+). 3 residues coordinate Na(+): threonine 101, valine 103, and isoleucine 106. Arginine 149 lines the a 2'-deoxyribonucleoside 5'-triphosphate pocket. Residue arginine 152 is modified to Omega-N-methylarginine; by PRMT6. Positions 180, 183, 189, and 190 each coordinate a 2'-deoxyribonucleoside 5'-triphosphate. A DNA-binding region spans residues 183-192 (RGAESSGDMD). The Mg(2+) site is built by aspartate 190, aspartate 192, and aspartate 256.

Belongs to the DNA polymerase type-X family. Monomer. Binds single-stranded DNA (ssDNA). Interacts with APEX1, LIG1, LIG3, FEN1, PCNA and XRCC1. Interacts with HUWE1/ARF-BP1, STUB1/CHIP and USP47. Interacts with FAM168A. Requires Mg(2+) as cofactor. Post-translationally, methylation by PRMT6 stimulates the polymerase activity by enhancing DNA binding and processivity. In terms of processing, ubiquitinated at Lys-41, Lys-61 and Lys-81: monoubiquitinated by HUWE1/ARF-BP1. Monoubiquitinated protein is then the target of STUB1/CHIP, which catalyzes polyubiquitination from monoubiquitin, leading to degradation by the proteasome. USP47 mediates the deubiquitination of monoubiquitinated protein, preventing polyubiquitination by STUB1/CHIP and its subsequent degradation.

The protein localises to the nucleus. The protein resides in the cytoplasm. The catalysed reaction is DNA(n) + a 2'-deoxyribonucleoside 5'-triphosphate = DNA(n+1) + diphosphate. It carries out the reaction a 5'-end 2'-deoxyribose-2'-deoxyribonucleotide-DNA = (2E,4S)-4-hydroxypenten-2-al-5-phosphate + a 5'-end 5'-phospho-2'-deoxyribonucleoside-DNA + H(+). The enzyme catalyses 2'-deoxyribonucleotide-(2'-deoxyribose 5'-phosphate)-2'-deoxyribonucleotide-DNA = a 3'-end 2'-deoxyribonucleotide-(2,3-dehydro-2,3-deoxyribose 5'-phosphate)-DNA + a 5'-end 5'-phospho-2'-deoxyribonucleoside-DNA + H(+). Its function is as follows. Repair polymerase that plays a key role in base-excision repair. During this process, the damaged base is excised by specific DNA glycosylases, the DNA backbone is nicked at the abasic site by an apurinic/apyrimidic (AP) endonuclease, and POLB removes 5'-deoxyribose-phosphate from the preincised AP site acting as a 5'-deoxyribose-phosphate lyase (5'-dRP lyase); through its DNA polymerase activity, it adds one nucleotide to the 3' end of the arising single-nucleotide gap. Conducts 'gap-filling' DNA synthesis in a stepwise distributive fashion rather than in a processive fashion as for other DNA polymerases. It is also able to cleave sugar-phosphate bonds 3' to an intact AP site, acting as an AP lyase. The protein is DNA polymerase beta (Polb) of Rattus norvegicus (Rat).